The chain runs to 598 residues: Aspartate--tRNA(Asp/Asn) ligase (598 aa).

Glu-172 lines the L-aspartate pocket. The segment at 196–199 (QLFK) is aspartate. Position 218 (Arg-218) interacts with L-aspartate. Residues 218–220 (RDE) and Gln-227 contribute to the ATP site. L-aspartate is bound at residue His-454. Position 488 (Glu-488) interacts with ATP. Position 495 (Arg-495) interacts with L-aspartate. An ATP-binding site is contributed by 540–543 (GLDR).

The protein belongs to the class-II aminoacyl-tRNA synthetase family. Type 1 subfamily. As to quaternary structure, homodimer.

Its subcellular location is the cytoplasm. The catalysed reaction is tRNA(Asx) + L-aspartate + ATP = L-aspartyl-tRNA(Asx) + AMP + diphosphate. In terms of biological role, aspartyl-tRNA synthetase with relaxed tRNA specificity since it is able to aspartylate not only its cognate tRNA(Asp) but also tRNA(Asn). Reaction proceeds in two steps: L-aspartate is first activated by ATP to form Asp-AMP and then transferred to the acceptor end of tRNA(Asp/Asn). This chain is Aspartate--tRNA(Asp/Asn) ligase, found in Leptothrix cholodnii (strain ATCC 51168 / LMG 8142 / SP-6) (Leptothrix discophora (strain SP-6)).